A 144-amino-acid chain; its full sequence is Globin (144 aa).

Alanine 1 is modified (N-acetylalanine). Residues 1 to 144 form the Globin domain; the sequence is ALSAADAGLL…IISALQSAGK (144 aa). Position 95 (histidine 95) interacts with heme b.

This sequence belongs to the globin family. In terms of assembly, monomer.

This chain is Globin, found in Aplysia juliana (Walking sea hare).